The sequence spans 342 residues: Polygalacturonase inhibitor 3 (342 aa).

The signal sequence occupies residues Met1–Ser29. 2 disulfides stabilise this stretch: Cys32–Cys62 and Cys63–Cys72. Residue Asn64 is glycosylated (N-linked (GlcNAc...) asparagine). LRR repeat units follow at residues Asn82–Leu107, Asn108–Leu132, His133–Leu156, Val157–Leu180, Val181–Phe205, Thr206–Leu228, Ala229–Thr252, Gln253–Leu275, Asn276–Leu299, and His300–Leu319. Asn141 carries an N-linked (GlcNAc...) asparagine glycan. Asn303 carries N-linked (GlcNAc...) asparagine glycosylation. Intrachain disulfides connect Cys310–Cys332 and Cys334–Cys341.

It belongs to the polygalacturonase-inhibiting protein family. In terms of tissue distribution, found in suspension-cultured cells and to a lesser extent in hypocotyls, leaves and flowers.

It is found in the secreted. The protein localises to the cell wall. It localises to the membrane. In terms of biological role, inhibitor of fungal polygalacturonase. It is an important factor for plant resistance to phytopathogenic fungi. This Phaseolus vulgaris (Kidney bean) protein is Polygalacturonase inhibitor 3 (PGIP3).